The primary structure comprises 280 residues: MSFAALEKTIDAAWEARDGINLQTKGEVRDAVEAALDALDSGSLRVAAKGDDGKWVVNQWLKKAVLLSFRLSDNKVMGDGPGTTWFDKVPTKFEGWDDSRFRAAGFRAVPGAVVRRSAYIAPGVVLMPSFVNLGAHVGSGTMVDTWATVGSCAQIGKNVHISGGAGIGGVLEPLQAGPVIIEDNCFIGARAEVAEGVIVETGAVLSMGVYIGASTKIVDRETGEIFMGRVPAYSVVVSGTMPGKPFPDGTPGPGLYCAVIVKRVDERTRSKVGINELLRD.

The substrate site is built by Arg-107 and Asp-144.

The protein belongs to the transferase hexapeptide repeat family. In terms of assembly, homotrimer.

It is found in the cytoplasm. The catalysed reaction is (S)-2,3,4,5-tetrahydrodipicolinate + succinyl-CoA + H2O = (S)-2-succinylamino-6-oxoheptanedioate + CoA. It functions in the pathway amino-acid biosynthesis; L-lysine biosynthesis via DAP pathway; LL-2,6-diaminopimelate from (S)-tetrahydrodipicolinate (succinylase route): step 1/3. The protein is 2,3,4,5-tetrahydropyridine-2,6-dicarboxylate N-succinyltransferase of Paramagnetospirillum magneticum (strain ATCC 700264 / AMB-1) (Magnetospirillum magneticum).